A 293-amino-acid polypeptide reads, in one-letter code: Porphobilinogen deaminase (293 aa).

Cys235 is subject to S-(dipyrrolylmethanemethyl)cysteine.

The protein belongs to the HMBS family. In terms of assembly, monomer. Dipyrromethane serves as cofactor.

The catalysed reaction is 4 porphobilinogen + H2O = hydroxymethylbilane + 4 NH4(+). It participates in porphyrin-containing compound metabolism; protoporphyrin-IX biosynthesis; coproporphyrinogen-III from 5-aminolevulinate: step 2/4. Its function is as follows. Tetrapolymerization of the monopyrrole PBG into the hydroxymethylbilane pre-uroporphyrinogen in several discrete steps. This Ruminiclostridium cellulolyticum (strain ATCC 35319 / DSM 5812 / JCM 6584 / H10) (Clostridium cellulolyticum) protein is Porphobilinogen deaminase.